The chain runs to 480 residues: ESX-1 secretion system ATPase EccB1 (480 aa).

The chain crosses the membrane as a helical span at residues 44–64 (IALGIVVAVLILAGAALLAYF). The interval 461–480 (DTLPADPSPRKVPAGASGAP) is disordered.

The protein belongs to the EccB family. Part of the ESX-1 / type VII secretion system (T7SS), which is composed of cytosolic and membrane components. The ESX-1 membrane complex is composed of EccB1, EccCa1, EccCb1, EccD1 and EccE1.

Its subcellular location is the cell inner membrane. An ATPase. Part of the ESX-1 specialized secretion system, which delivers several virulence factors to host cells during infection, including the key virulence factors EsxA (ESAT-6) and EsxB (CFP-10). The protein is ESX-1 secretion system ATPase EccB1 of Mycobacterium tuberculosis (strain CDC 1551 / Oshkosh).